The sequence spans 529 residues: Potassium voltage-gated channel subfamily A member 6 (529 aa).

The interval 1 to 33 (MRSEKSLTLAAPGEVRGPEGEQQDAGDFPEAGG) is disordered. Over 1–171 (MRSEKSLTLA…LLFEYPESSG (171 aa)) the chain is Cytoplasmic. Ser-3 carries the post-translational modification Phosphoserine. Residues 172-193 (PARGIAIVSVLVILISIVIFCL) form a helical membrane-spanning segment. Over 194–262 (ETLPQFRVDG…TLGGSFFTDP (69 aa)) the chain is Extracellular. Residues 210–220 (GVSRVSPVSRG) show a composition bias toward low complexity. Positions 210–233 (GVSRVSPVSRGSQEEEEDEDDSYT) are disordered. The helical transmembrane segment at 263–284 (FFLVETLCIVWFTFELLVRFSA) threads the bilayer. Cys-285 carries S-palmitoyl cysteine lipidation. Topologically, residues 285 to 295 (CPSKPAFFRNI) are cytoplasmic. The chain crosses the membrane as a helical span at residues 296–316 (MNIIDLVAIFPYFITLGTELV). Topologically, residues 317-337 (QQQEQQPASGGGGQNGQQAMS) are extracellular. A helical; Voltage-sensor membrane pass occupies residues 338–358 (LAILRVIRLVRVFRIFKLSRH). The Cytoplasmic segment spans residues 359–373 (SKGLQILGKTLQASM). An S4-S5 linker region spans residues 360-373 (KGLQILGKTLQASM). A helical membrane pass occupies residues 374–395 (RELGLLIFFLFIGVILFSSAVY). Topologically, residues 396–409 (FAEADDDDSLFPSI) are extracellular. The segment at residues 410–421 (PDAFWWAVVTMT) is an intramembrane region (helical). Positions 422–427 (TVGYGD) match the Selectivity filter motif. Residues 422 to 429 (TVGYGDMY) lie within the membrane without spanning it. Topologically, residues 430 to 436 (PMTVGGK) are extracellular. The helical transmembrane segment at 437-465 (IVGSLCAIAGVLTIALPVPVIVSNFNYFY) threads the bilayer. Over 466-529 (HRETEQEEQG…YAEKRMLTEV (64 aa)) the chain is Cytoplasmic. The interval 488 to 513 (DLRATDNGLGKPDFPEANRERRPSYL) is disordered. Residues 500–510 (DFPEANRERRP) are compositionally biased toward basic and acidic residues. A Phosphoserine; by PKA modification is found at Ser-511. The PDZ-binding motif lies at 527–529 (TEV).

This sequence belongs to the potassium channel family. A (Shaker) (TC 1.A.1.2) subfamily. Kv1.6/KCNA6 sub-subfamily. As to quaternary structure, homotetramer and heterotetramer of potassium channel proteins. Interacts with KCNAB1 and KCNAB2.

It is found in the cell membrane. It carries out the reaction K(+)(in) = K(+)(out). In terms of biological role, voltage-gated potassium channel that mediates transmembrane potassium transport in excitable membranes. Forms tetrameric potassium-selective channels through which potassium ions pass in accordance with their electrochemical gradient. The channel alternates between opened and closed conformations in response to the voltage difference across the membrane. Can form functional homotetrameric channels and heterotetrameric channels that contain variable proportions of KCNA1, KCNA2, KCNA4, KCNA6, and possibly other family members as well; channel properties depend on the type of alpha subunits that are part of the channel. Channel properties are modulated by cytoplasmic beta subunits that regulate the subcellular location of the alpha subunits and promote rapid inactivation. Homotetrameric channels display rapid activation and slow inactivation. This chain is Potassium voltage-gated channel subfamily A member 6 (KCNA6), found in Homo sapiens (Human).